A 259-amino-acid polypeptide reads, in one-letter code: Tryptophan synthase alpha chain (259 aa).

Active-site proton acceptor residues include E52 and D63.

The protein belongs to the TrpA family. As to quaternary structure, tetramer of two alpha and two beta chains.

It carries out the reaction (1S,2R)-1-C-(indol-3-yl)glycerol 3-phosphate + L-serine = D-glyceraldehyde 3-phosphate + L-tryptophan + H2O. It participates in amino-acid biosynthesis; L-tryptophan biosynthesis; L-tryptophan from chorismate: step 5/5. In terms of biological role, the alpha subunit is responsible for the aldol cleavage of indoleglycerol phosphate to indole and glyceraldehyde 3-phosphate. The protein is Tryptophan synthase alpha chain of Streptococcus gordonii (strain Challis / ATCC 35105 / BCRC 15272 / CH1 / DL1 / V288).